Here is a 445-residue protein sequence, read N- to C-terminus: FAS-associated factor 2 (445 aa).

Ala2 is modified (N-acetylalanine). The region spanning 12–48 is the UBA domain; the sequence is EQTEKLLQFQDLTGIESMDQCRHTLEQHNWNIEAAVQ. An N6-acetyllysine modification is found at Lys167. The stretch at 275–350 forms a coiled coil; the sequence is SERLEREERN…EEKERKLECL (76 aa). Residues 299–361 form a disordered region; that stretch reads ASLRADQEKE…PEPSPDDPES (63 aa). A compositionally biased stretch (basic and acidic residues) spans 303–348; it reads ADQEKERKKREERERKRRKEEEVQQQKLAEERRRQNLQEEKERKLE. Positions 357-439 constitute a UBX domain; that stretch reads DDPESVKIIF…GLSHTEVLFV (83 aa).

Identified in a complex that contains SEL1L, OS9, FAF2/UBXD8, UBE2J1/UBC6E and AUP1. Interacts with YOD1. Interacts (via N-terminus) with UBQLN2 (via C-terminus). Interacts with PNPLA2 and UBAC2. Interacts with ZFAND2B; probably through VCP. Interacts with LMBR1L. As to expression, broadly expressed, with highest levels in brain.

The protein resides in the cytoplasm. It localises to the lipid droplet. The protein localises to the endoplasmic reticulum. Functionally, plays an important role in endoplasmic reticulum-associated degradation (ERAD) that mediates ubiquitin-dependent degradation of misfolded endoplasmic reticulum proteins. By controlling the steady-state expression of the IGF1R receptor, indirectly regulates the insulin-like growth factor receptor signaling pathway. Involved in inhibition of lipid droplet degradation by binding to phospholipase PNPL2 and inhibiting its activity by promoting dissociation of PNPL2 from its endogenous activator, ABHD5 which inhibits the rate of triacylglycerol hydrolysis. Involved in stress granule disassembly: associates with ubiquitinated G3BP1 in response to heat shock, thereby promoting interaction between ubiquitinated G3BP1 and VCP, followed by G3BP1 extraction from stress granules and stress granule disassembly. This is FAS-associated factor 2 from Homo sapiens (Human).